Here is a 211-residue protein sequence, read N- to C-terminus: Large ribosomal subunit protein bL25 (211 aa).

2 disordered regions span residues 1 to 23 (MAGE…AARQ) and 191 to 211 (LRSA…AEEV). The span at 196 to 211 (NEADEEETEEATAEEV) shows a compositional bias: acidic residues.

Belongs to the bacterial ribosomal protein bL25 family. CTC subfamily. In terms of assembly, part of the 50S ribosomal subunit; part of the 5S rRNA/L5/L18/L25 subcomplex. Contacts the 5S rRNA. Binds to the 5S rRNA independently of L5 and L18.

This is one of the proteins that binds to the 5S RNA in the ribosome where it forms part of the central protuberance. The chain is Large ribosomal subunit protein bL25 from Dinoroseobacter shibae (strain DSM 16493 / NCIMB 14021 / DFL 12).